The primary structure comprises 349 residues: Protein-glutamate methylesterase/protein-glutamine glutaminase (349 aa).

A Response regulatory domain is found at 5–122 (RVLSVDDSAL…REGMLAYSEM (118 aa)). The residue at position 56 (Asp-56) is a 4-aspartylphosphate. The region spanning 152 to 344 (LLSSEKLIAI…QQMLAKISAG (193 aa)) is the CheB-type methylesterase domain. Catalysis depends on residues Ser-164, His-190, and Asp-286.

This sequence belongs to the CheB family. Post-translationally, phosphorylated by CheA. Phosphorylation of the N-terminal regulatory domain activates the methylesterase activity.

The protein localises to the cytoplasm. The enzyme catalyses [protein]-L-glutamate 5-O-methyl ester + H2O = L-glutamyl-[protein] + methanol + H(+). The catalysed reaction is L-glutaminyl-[protein] + H2O = L-glutamyl-[protein] + NH4(+). Involved in chemotaxis. Part of a chemotaxis signal transduction system that modulates chemotaxis in response to various stimuli. Catalyzes the demethylation of specific methylglutamate residues introduced into the chemoreceptors (methyl-accepting chemotaxis proteins or MCP) by CheR. Also mediates the irreversible deamidation of specific glutamine residues to glutamic acid. The protein is Protein-glutamate methylesterase/protein-glutamine glutaminase of Escherichia coli O6:K15:H31 (strain 536 / UPEC).